A 491-amino-acid chain; its full sequence is Cytochrome P450 2B3 (491 aa).

Cys-436 provides a ligand contact to heme.

The protein belongs to the cytochrome P450 family. Heme is required as a cofactor. As to expression, liver. Not found in the lung, kidney and prostate.

The protein resides in the endoplasmic reticulum membrane. The protein localises to the microsome membrane. It catalyses the reaction an organic molecule + reduced [NADPH--hemoprotein reductase] + O2 = an alcohol + oxidized [NADPH--hemoprotein reductase] + H2O + H(+). In terms of biological role, cytochromes P450 are a group of heme-thiolate monooxygenases. In liver microsomes, this enzyme is involved in an NADPH-dependent electron transport pathway. It oxidizes a variety of structurally unrelated compounds, including steroids, fatty acids, and xenobiotics. This chain is Cytochrome P450 2B3 (Cyp2b3), found in Rattus norvegicus (Rat).